The chain runs to 341 residues: Phosphate acyltransferase (341 aa).

The protein belongs to the PlsX family. As to quaternary structure, homodimer. Probably interacts with PlsY.

The protein resides in the cytoplasm. The enzyme catalyses a fatty acyl-[ACP] + phosphate = an acyl phosphate + holo-[ACP]. The protein operates within lipid metabolism; phospholipid metabolism. Its function is as follows. Catalyzes the reversible formation of acyl-phosphate (acyl-PO(4)) from acyl-[acyl-carrier-protein] (acyl-ACP). This enzyme utilizes acyl-ACP as fatty acyl donor, but not acyl-CoA. In Aliivibrio fischeri (strain ATCC 700601 / ES114) (Vibrio fischeri), this protein is Phosphate acyltransferase.